The following is a 447-amino-acid chain: Tubulin beta chain (447 aa).

The GTP site is built by Q11, E69, S138, G142, T143, G144, N204, and N226. Mg(2+) is bound at residue E69. Residues Y425–E447 form a disordered region. Residues E432–E447 show a composition bias toward acidic residues.

Belongs to the tubulin family. Dimer of alpha and beta chains. A typical microtubule is a hollow water-filled tube with an outer diameter of 25 nm and an inner diameter of 15 nM. Alpha-beta heterodimers associate head-to-tail to form protofilaments running lengthwise along the microtubule wall with the beta-tubulin subunit facing the microtubule plus end conferring a structural polarity. Microtubules usually have 13 protofilaments but different protofilament numbers can be found in some organisms and specialized cells. It depends on Mg(2+) as a cofactor.

It localises to the cytoplasm. The protein resides in the cytoskeleton. In terms of biological role, tubulin is the major constituent of microtubules, a cylinder consisting of laterally associated linear protofilaments composed of alpha- and beta-tubulin heterodimers. Microtubules grow by the addition of GTP-tubulin dimers to the microtubule end, where a stabilizing cap forms. Below the cap, tubulin dimers are in GDP-bound state, owing to GTPase activity of alpha-tubulin. The protein is Tubulin beta chain (tubB) of Phaeosphaeria nodorum (strain SN15 / ATCC MYA-4574 / FGSC 10173) (Glume blotch fungus).